The sequence spans 371 residues: MSL complex subunit 3B (371 aa).

Disordered regions lie at residues 1 to 44 (MATL…READ) and 160 to 229 (EERA…SPQA). Basic and acidic residues predominate over residues 8-44 (PKDDGEGKDEGGSDRGDGDPKPKGKKEVEAHTRREAD). One can recognise an MRG domain in the interval 44–367 (DERAVRIPIP…CEAHYSSKNP (324 aa)). Over residues 206–216 (APRRSTRHSTH) the composition is skewed to basic residues.

It is found in the nucleus. In terms of biological role, probable non-catalytic component of the MSL histone acetyltransferase complex, a multiprotein complex that mediates the majority of histone H4 acetylation at 'Lys-16' (H4K16ac), an epigenetic mark that prevents chromatin compaction. This Rattus norvegicus (Rat) protein is MSL complex subunit 3B.